The chain runs to 196 residues: Large ribosomal subunit protein bL25 (196 aa).

This sequence belongs to the bacterial ribosomal protein bL25 family. CTC subfamily. In terms of assembly, part of the 50S ribosomal subunit; part of the 5S rRNA/L5/L18/L25 subcomplex. Contacts the 5S rRNA. Binds to the 5S rRNA independently of L5 and L18.

This is one of the proteins that binds to the 5S RNA in the ribosome where it forms part of the central protuberance. This Bacteroides fragilis (strain ATCC 25285 / DSM 2151 / CCUG 4856 / JCM 11019 / LMG 10263 / NCTC 9343 / Onslow / VPI 2553 / EN-2) protein is Large ribosomal subunit protein bL25.